Here is a 307-residue protein sequence, read N- to C-terminus: Ribonuclease Z (307 aa).

Zn(2+) contacts are provided by H61, H63, D65, H66, H138, D208, and H264. Residue D65 is the Proton acceptor of the active site.

The protein belongs to the RNase Z family. In terms of assembly, homodimer. It depends on Zn(2+) as a cofactor.

It catalyses the reaction Endonucleolytic cleavage of RNA, removing extra 3' nucleotides from tRNA precursor, generating 3' termini of tRNAs. A 3'-hydroxy group is left at the tRNA terminus and a 5'-phosphoryl group is left at the trailer molecule.. Zinc phosphodiesterase, which displays some tRNA 3'-processing endonuclease activity. Probably involved in tRNA maturation, by removing a 3'-trailer from precursor tRNA. Also shows activity toward a broad range of substrates, such as intron containing pre-tRNAs, 5' extended precursors and non-RNA substrates. The polypeptide is Ribonuclease Z (Pyrococcus furiosus (strain ATCC 43587 / DSM 3638 / JCM 8422 / Vc1)).